The following is a 159-amino-acid chain: MKIKLVTVGKLKEKYLIQGINEYLKRLNSYAKMEIIEVPDEKAPEKLSDAEMLQVKEKEGQRILGKINDNEYVFVLAINGKQLSSEEFSKEIEQLGISGKSNLTFVIGGSLGLSDSVLQRSNQQISFGRLTYPHQLMRLVLVEQIYRGFRIMKGEPYHK.

S-adenosyl-L-methionine is bound by residues leucine 76, glycine 108, and 127 to 132; that span reads FGRLTY.

The protein belongs to the RNA methyltransferase RlmH family. Homodimer.

It localises to the cytoplasm. The catalysed reaction is pseudouridine(1915) in 23S rRNA + S-adenosyl-L-methionine = N(3)-methylpseudouridine(1915) in 23S rRNA + S-adenosyl-L-homocysteine + H(+). Its function is as follows. Specifically methylates the pseudouridine at position 1915 (m3Psi1915) in 23S rRNA. In Enterococcus faecalis (strain ATCC 700802 / V583), this protein is Ribosomal RNA large subunit methyltransferase H.